Reading from the N-terminus, the 565-residue chain is Periplasmic trehalase (565 aa).

The N-terminal stretch at 1–30 is a signal peptide; that stretch reads MKSPTPSRPQKMALIPACIFLCFAALSVQA. Substrate-binding positions include arginine 152, 159 to 160, asparagine 196, 205 to 207, 277 to 279, and glycine 310; these read WD, RSQ, and RPE. Residues aspartate 312 and glutamate 496 each act as proton donor/acceptor in the active site. Glutamate 511 serves as a coordination point for substrate. Residues 539–565 are disordered; that stretch reads CDNVPATRPLSESTTQPLKQKEAEPTP.

The protein belongs to the glycosyl hydrolase 37 family. Monomer.

Its subcellular location is the periplasm. The enzyme catalyses alpha,alpha-trehalose + H2O = alpha-D-glucose + beta-D-glucose. Provides the cells with the ability to utilize trehalose at high osmolarity by splitting it into glucose molecules that can subsequently be taken up by the phosphotransferase-mediated uptake system. This is Periplasmic trehalase from Escherichia coli O7:K1 (strain IAI39 / ExPEC).